The primary structure comprises 633 residues: MTAPHETMSFQAEVKQLLHLMIHSLYSNKEIFLRELVSNASDATDKLRFEAIANPSLLENDADLAIRIEADAKARTLTITDNGIGMSRDEAIHNLGTIARSGTKEFFQQLSGDQQKDAALIGQFGVGFYSAFIVADKVTVETRRAGLGAEDAVRWESTGDGEFTIDAIARNERGTTITLHLREGEDDFLSAWRLKGIIQKYSDHISLPIRMPKEVWDAESSTYQRTAEWESVNQASALWTRAKSDITDEQYTAFYQHIAHDNEAPLAWTHNRVEGRSEYTQLLYIPARAPFDLWDRNHKAGLKLYVKRVFIMDDADQLLPGYLRWVKGVVDSADLPLNVSRELLQESRDVKAIREGCTKRVLSMLETLADSEEEAERAKYTTFWQQFGQALKEGIGEDQANLERVAKLLRFASTHNDTAEQNVALAAYVGRMKEGQDKIYYVTADTWSAAKNSPHLEVFRKKGIEVLLLTDRVDEWMLSFLREFDGKELVSVARGDLDLGKLADEAEKAEQEKAEADWKDVVDRAKTVLDGKAKDVRVTLRLTASASCLVSDEGDMSGYLQRLLKQAGQKAPDAQPILELNPEHALVQKLRDLPEGDAFSDRVQVLFDQALLAEGGMLDDPAAYVQRVNKLLA.

An a; substrate-binding region spans residues 1–341 (MTAPHETMSF…SADLPLNVSR (341 aa)). Residues 342 to 562 (ELLQESRDVK…EGDMSGYLQR (221 aa)) are b. A c region spans residues 563-633 (LLKQAGQKAP…YVQRVNKLLA (71 aa)).

Belongs to the heat shock protein 90 family. Homodimer.

It localises to the cytoplasm. Its function is as follows. Molecular chaperone. Has ATPase activity. This chain is Chaperone protein HtpG, found in Cupriavidus necator (strain ATCC 17699 / DSM 428 / KCTC 22496 / NCIMB 10442 / H16 / Stanier 337) (Ralstonia eutropha).